The sequence spans 143 residues: Large ribosomal subunit protein uL11 (143 aa).

This sequence belongs to the universal ribosomal protein uL11 family. As to quaternary structure, part of the ribosomal stalk of the 50S ribosomal subunit. Interacts with L10 and the large rRNA to form the base of the stalk. L10 forms an elongated spine to which L12 dimers bind in a sequential fashion forming a multimeric L10(L12)X complex. One or more lysine residues are methylated.

Functionally, forms part of the ribosomal stalk which helps the ribosome interact with GTP-bound translation factors. The sequence is that of Large ribosomal subunit protein uL11 from Laribacter hongkongensis (strain HLHK9).